A 181-amino-acid polypeptide reads, in one-letter code: Protein Syd (181 aa).

Belongs to the Syd family.

It is found in the cell inner membrane. In terms of biological role, interacts with the SecY protein in vivo. May bind preferentially to an uncomplexed state of SecY, thus functioning either as a chelating agent for excess SecY in the cell or as a regulatory factor that negatively controls the translocase function. This chain is Protein Syd, found in Enterobacter sp. (strain 638).